Reading from the N-terminus, the 316-residue chain is MSGDTCLCPASGAKPKISGFKGGGLGNKYVQLNVGGSLHYTTVRALTRHDTMLKAMFSGRMEVLTDKEGWILIDRCGKHFGTILNYLRDDTVTLPQSRQEIQELMAEAKYYLIQGLVSLCQAALQDKKDSYQPVCNIPIITSLREEDRLIESSTKPVVKLLYNRSNNKYSYTSNSDDHLLKNIELFDKLSLRFNGRVLFIKDVIGDEICCWSFYGQGRKLAEVCCTSIVYATEKKQTKVEFPEARIYEETLNVLLYETPRVPDNSLLEATSRSRSQASPSEDEDTFELRDRVRRIHVKRYSTYDDRQLGHQSAHRD.

The BTB domain occupies 28 to 96; sequence KYVQLNVGGS…LRDDTVTLPQ (69 aa). Polar residues predominate over residues 268-279; the sequence is EATSRSRSQASP. Residues 268–287 form a disordered region; the sequence is EATSRSRSQASPSEDEDTFE. Phosphoserine is present on Ser278. At Ser280 the chain carries Phosphoserine; by CK2.

This sequence belongs to the BACURD family. As to quaternary structure, component of the BCR(TNFAIP1) E3 ubiquitin ligase complex, at least composed of CUL3, TNFAIP1/BACURD2 and RBX1. Interacts with RHOA; with a preference for RhoA-GDP. Interacts with RHOB. Interacts with CSNK2B. Interacts with PCNA. Post-translationally, phosphorylation at Ser-280 by CK2 facilitates the nucleus localization and increases interaction with PCNA.

The protein resides in the cytoplasm. The protein localises to the nucleus. Its subcellular location is the endosome. Its pathway is protein modification; protein ubiquitination. Functionally, substrate-specific adapter of a BCR (BTB-CUL3-RBX1) E3 ubiquitin-protein ligase complex involved in regulation of cytoskeleton structure. The BCR(TNFAIP1) E3 ubiquitin ligase complex mediates the ubiquitination of RHOA, leading to its degradation by the proteasome, thereby regulating the actin cytoskeleton and cell migration. Its interaction with RHOB may regulate apoptosis. May enhance the PCNA-dependent DNA polymerase delta activity. This Rattus norvegicus (Rat) protein is BTB/POZ domain-containing adapter for CUL3-mediated RhoA degradation protein 2 (Tnfaip1).